Here is a 478-residue protein sequence, read N- to C-terminus: Glycogen synthase (478 aa).

K15 provides a ligand contact to ADP-alpha-D-glucose.

This sequence belongs to the glycosyltransferase 1 family. Bacterial/plant glycogen synthase subfamily.

The catalysed reaction is [(1-&gt;4)-alpha-D-glucosyl](n) + ADP-alpha-D-glucose = [(1-&gt;4)-alpha-D-glucosyl](n+1) + ADP + H(+). It participates in glycan biosynthesis; glycogen biosynthesis. Its function is as follows. Synthesizes alpha-1,4-glucan chains using ADP-glucose. This is Glycogen synthase from Lactococcus lactis subsp. lactis (strain IL1403) (Streptococcus lactis).